A 485-amino-acid polypeptide reads, in one-letter code: Peroxisomal catalase (485 aa).

Catalysis depends on residues H53 and N126. Y336 provides a ligand contact to heme.

The protein belongs to the catalase family. As to quaternary structure, homotetramer. The cofactor is heme.

It is found in the peroxisome matrix. The catalysed reaction is 2 H2O2 = O2 + 2 H2O. Its function is as follows. Catalyzes the degradation of hydrogen peroxide (H(2)O(2)) generated by peroxisomal oxidases to water and oxygen, thereby protecting cells from the toxic effects of hydrogen peroxide. The chain is Peroxisomal catalase (CAT1) from Candida albicans (strain SC5314 / ATCC MYA-2876) (Yeast).